The chain runs to 278 residues: Indole-3-glycerol phosphate synthase (278 aa).

It belongs to the TrpC family.

The catalysed reaction is 1-(2-carboxyphenylamino)-1-deoxy-D-ribulose 5-phosphate + H(+) = (1S,2R)-1-C-(indol-3-yl)glycerol 3-phosphate + CO2 + H2O. It functions in the pathway amino-acid biosynthesis; L-tryptophan biosynthesis; L-tryptophan from chorismate: step 4/5. The chain is Indole-3-glycerol phosphate synthase from Pseudomonas fluorescens (strain ATCC BAA-477 / NRRL B-23932 / Pf-5).